Consider the following 814-residue polypeptide: Threonine--tRNA ligase 2, cytoplasmic (814 aa).

A coiled-coil region spans residues 2–72 (AAHIAQRLTV…SLREEQERAR (71 aa)). Residues 62–142 (RSLREEQERA…GHKQEGPCAP (81 aa)) form a disordered region. Composition is skewed to basic and acidic residues over residues 63-72 (SLREEQERAR), 88-102 (EEPKQQNNKAKEKGQ), and 119-137 (GNKKNEKKAGKEVDGHKQE). In terms of domain architecture, TGS spans 172–234 (KPIKITLADG…EQDSNVELLK (63 aa)). A Nuclear localization signal motif is present at residues 798 to 804 (KLKTLKK).

This sequence belongs to the class-II aminoacyl-tRNA synthetase family.

The protein resides in the cytoplasm. The protein localises to the nucleus. The enzyme catalyses tRNA(Thr) + L-threonine + ATP = L-threonyl-tRNA(Thr) + AMP + diphosphate + H(+). In terms of biological role, catalyzes the attachment of threonine to tRNA(Thr) in a two-step reaction: threonine is first activated by ATP to form Thr-AMP and then transferred to the acceptor end of tRNA(Thr). Also edits incorrectly charged tRNA(Thr) via its editing domain, at the post-transfer stage. In Xenopus tropicalis (Western clawed frog), this protein is Threonine--tRNA ligase 2, cytoplasmic (tars3).